The sequence spans 472 residues: Maintenance of mitochondrial morphology protein 1 (472 aa).

Residues 1 to 22 (MAFQQGEAAPVSTQSSLSFTQG) are Lumenal-facing. A helical membrane pass occupies residues 23-43 (FLLGQLSVVLLIGAFIKFFIF). At 44–472 (GEAPPPPSRG…GSMPEAPGAQ (429 aa)) the chain is on the cytoplasmic side. Disordered regions lie at residues 51–92 (SRGL…VPSS), 270–303 (LHTP…PKSS), and 370–472 (RMGR…PGAQ). Polar residues predominate over residues 81–92 (STSNVLRPVPSS). In terms of domain architecture, SMP-LTD spans 124–365 (QPESLDWFNV…EPRVQVVGLP (242 aa)). Residues 270–280 (LHTPSPMPSPP) show a composition bias toward pro residues. Residues 281–297 (TAGAQPAAGAQPTDGGD) are compositionally biased toward low complexity. The segment covering 450 to 460 (TRERSLGDDFH) has biased composition (basic and acidic residues).

Belongs to the MMM1 family. In terms of assembly, homodimer. Component of the ER-mitochondria encounter structure (ERMES) or MDM complex, composed of mmm1, mdm10, mdm12 and mdm34. A mmm1 homodimer associates with one molecule of mdm12 on each side in a pairwise head-to-tail manner, and the SMP-LTD domains of mmm1 and mdm12 generate a continuous hydrophobic tunnel for phospholipid trafficking.

The protein resides in the endoplasmic reticulum membrane. Component of the ERMES/MDM complex, which serves as a molecular tether to connect the endoplasmic reticulum (ER) and mitochondria. Components of this complex are involved in the control of mitochondrial shape and protein biogenesis, and function in nonvesicular lipid trafficking between the ER and mitochondria. The mdm12-mmm1 subcomplex functions in the major beta-barrel assembly pathway that is responsible for biogenesis of all outer membrane beta-barrel proteins, and acts in a late step after the SAM complex. The mdm10-mdm12-mmm1 subcomplex further acts in the TOM40-specific pathway after the action of the mdm12-mmm1 complex. Essential for establishing and maintaining the structure of mitochondria and maintenance of mtDNA nucleoids. The chain is Maintenance of mitochondrial morphology protein 1 from Emericella nidulans (strain FGSC A4 / ATCC 38163 / CBS 112.46 / NRRL 194 / M139) (Aspergillus nidulans).